A 475-amino-acid chain; its full sequence is Maintenance of mitochondrial morphology protein 1 (475 aa).

Residues 1–14 (MSETFSPNLTFTEG) lie on the Lumenal side of the membrane. A helical transmembrane segment spans residues 15-35 (FVLGQASFLIILLLFIRYVVF). Residues 36–475 (SPSEQIDHEG…VTPGQVGTSR (440 aa)) lie on the Cytoplasmic side of the membrane. An SMP-LTD domain is found at 80–278 (PAESSDWVNV…HPNHISLALP (199 aa)). Disordered regions lie at residues 321–381 (NPVE…GQPQ) and 394–475 (SYPH…GTSR). Positions 341–351 (PPTPLVQPPGT) are enriched in pro residues. Composition is skewed to polar residues over residues 353–380 (PTLS…QGQP) and 394–403 (SYPHYNTYTL). A compositionally biased stretch (low complexity) spans 442 to 464 (STTSSLTPSQSQSQFRFRGQFAS).

The protein belongs to the MMM1 family. As to quaternary structure, homodimer. Component of the ER-mitochondria encounter structure (ERMES) or MDM complex, composed of MMM1, MDM10, MDM12 and MDM34. An MMM1 homodimer associates with one molecule of MDM12 on each side in a pairwise head-to-tail manner, and the SMP-LTD domains of MMM1 and MDM12 generate a continuous hydrophobic tunnel for phospholipid trafficking.

It localises to the endoplasmic reticulum membrane. In terms of biological role, component of the ERMES/MDM complex, which serves as a molecular tether to connect the endoplasmic reticulum (ER) and mitochondria. Components of this complex are involved in the control of mitochondrial shape and protein biogenesis, and function in nonvesicular lipid trafficking between the ER and mitochondria. The MDM12-MMM1 subcomplex functions in the major beta-barrel assembly pathway that is responsible for biogenesis of all outer membrane beta-barrel proteins, and acts in a late step after the SAM complex. The MDM10-MDM12-MMM1 subcomplex further acts in the TOM40-specific pathway after the action of the MDM12-MMM1 complex. Essential for establishing and maintaining the structure of mitochondria and maintenance of mtDNA nucleoids. This is Maintenance of mitochondrial morphology protein 1 from Cryptococcus neoformans var. neoformans serotype D (strain B-3501A) (Filobasidiella neoformans).